The sequence spans 425 residues: Serine--tRNA ligase (425 aa).

230-232 (TAE) is an L-serine binding site. 261–263 (RQE) lines the ATP pocket. Residue glutamate 284 participates in L-serine binding. 348-351 (EISS) is a binding site for ATP. Residue serine 384 participates in L-serine binding.

This sequence belongs to the class-II aminoacyl-tRNA synthetase family. Type-1 seryl-tRNA synthetase subfamily. As to quaternary structure, homodimer. The tRNA molecule binds across the dimer.

It is found in the cytoplasm. The enzyme catalyses tRNA(Ser) + L-serine + ATP = L-seryl-tRNA(Ser) + AMP + diphosphate + H(+). It carries out the reaction tRNA(Sec) + L-serine + ATP = L-seryl-tRNA(Sec) + AMP + diphosphate + H(+). It participates in aminoacyl-tRNA biosynthesis; selenocysteinyl-tRNA(Sec) biosynthesis; L-seryl-tRNA(Sec) from L-serine and tRNA(Sec): step 1/1. Functionally, catalyzes the attachment of serine to tRNA(Ser). Is also able to aminoacylate tRNA(Sec) with serine, to form the misacylated tRNA L-seryl-tRNA(Sec), which will be further converted into selenocysteinyl-tRNA(Sec). This Caldanaerobacter subterraneus subsp. tengcongensis (strain DSM 15242 / JCM 11007 / NBRC 100824 / MB4) (Thermoanaerobacter tengcongensis) protein is Serine--tRNA ligase.